The following is a 233-amino-acid chain: Nickel import system ATP-binding protein NikE (233 aa).

Positions 2 to 228 constitute an ABC transporter domain; sequence IELKHVTFGY…DRHPYTKELV (227 aa). 35–42 provides a ligand contact to ATP; sequence GESGCGKS.

It belongs to the ABC transporter superfamily. The complex is composed of two ATP-binding proteins (NikD and NikE), two transmembrane proteins (NikB and NikC) and a solute-binding protein (NikA).

It localises to the cell membrane. It carries out the reaction Ni(2+)(out) + ATP + H2O = Ni(2+)(in) + ADP + phosphate + H(+). Its function is as follows. Part of the ABC transporter complex NikABCDE (Opp2) involved in nickel import. Probably responsible for energy coupling to the transport system. The polypeptide is Nickel import system ATP-binding protein NikE (Staphylococcus aureus (strain USA300)).